Here is a 316-residue protein sequence, read N- to C-terminus: L-lactate dehydrogenase 1 (316 aa).

Positions 17, 38, 43, and 69 each coordinate NAD(+). Residues Arg-92 and 124–127 each bind substrate; that span reads NPVD. Residues 122–124 and Thr-147 contribute to the NAD(+) site; that span reads VSN. 152–155 contacts substrate; the sequence is DTSR. Residue His-179 is the Proton acceptor of the active site. Residue Thr-234 coordinates substrate.

The protein belongs to the LDH/MDH superfamily. LDH family. In terms of assembly, homotetramer.

The protein localises to the cytoplasm. The catalysed reaction is (S)-lactate + NAD(+) = pyruvate + NADH + H(+). Its pathway is fermentation; pyruvate fermentation to lactate; (S)-lactate from pyruvate: step 1/1. In terms of biological role, catalyzes the conversion of lactate to pyruvate. The protein is L-lactate dehydrogenase 1 of Bifidobacterium longum subsp. longum (strain ATCC 15707 / DSM 20219 / JCM 1217 / NCTC 11818 / E194b).